The chain runs to 229 residues: Urease accessory protein UreF (229 aa).

The protein belongs to the UreF family. As to quaternary structure, ureD, UreF and UreG form a complex that acts as a GTP-hydrolysis-dependent molecular chaperone, activating the urease apoprotein by helping to assemble the nickel containing metallocenter of UreC. The UreE protein probably delivers the nickel.

The protein resides in the cytoplasm. Required for maturation of urease via the functional incorporation of the urease nickel metallocenter. In Staphylococcus epidermidis (strain ATCC 35984 / DSM 28319 / BCRC 17069 / CCUG 31568 / BM 3577 / RP62A), this protein is Urease accessory protein UreF.